Reading from the N-terminus, the 383-residue chain is Chaperone protein DnaJ (383 aa).

The J domain occupies 5-70 (DYYEVLGVAK…EKRAAYDRFG (66 aa)). The segment at 139-217 (GKTETIRIPT…CSGAGRVNRE (79 aa)) adopts a CR-type zinc-finger fold. The Zn(2+) site is built by C152, C155, C169, C172, C191, C194, C205, and C208. CXXCXGXG motif repeat units lie at residues 152–159 (CEACSGTG), 169–176 (CSTCGGYG), 191–198 (CPNCHGRG), and 205–212 (CTACSGAG).

The protein belongs to the DnaJ family. Homodimer. The cofactor is Zn(2+).

It is found in the cytoplasm. In terms of biological role, participates actively in the response to hyperosmotic and heat shock by preventing the aggregation of stress-denatured proteins and by disaggregating proteins, also in an autonomous, DnaK-independent fashion. Unfolded proteins bind initially to DnaJ; upon interaction with the DnaJ-bound protein, DnaK hydrolyzes its bound ATP, resulting in the formation of a stable complex. GrpE releases ADP from DnaK; ATP binding to DnaK triggers the release of the substrate protein, thus completing the reaction cycle. Several rounds of ATP-dependent interactions between DnaJ, DnaK and GrpE are required for fully efficient folding. Also involved, together with DnaK and GrpE, in the DNA replication of plasmids through activation of initiation proteins. The polypeptide is Chaperone protein DnaJ (Methylorubrum populi (strain ATCC BAA-705 / NCIMB 13946 / BJ001) (Methylobacterium populi)).